We begin with the raw amino-acid sequence, 254 residues long: Probable protein ABIL5 (254 aa).

Positions 1-26 (MEVAEAGVDGVAGRRQQEEASGAAPF) are disordered.

This sequence belongs to the ABI family. In terms of assembly, binds SCAR.

It localises to the cytoplasm. The protein localises to the cytoskeleton. In terms of biological role, involved in regulation of actin and microtubule organization. Part of a WAVE complex that activates the Arp2/3 complex. The polypeptide is Probable protein ABIL5 (Oryza sativa subsp. japonica (Rice)).